A 600-amino-acid polypeptide reads, in one-letter code: Cytidine monophosphate-N-acetylneuraminic acid hydroxylase (600 aa).

The Rieske domain occupies leucine 9–leucine 107. [2Fe-2S] cluster contacts are provided by cysteine 49, histidine 51, cysteine 70, and histidine 73.

It belongs to the CMP-Neu5Ac hydroxylase family. Requires [2Fe-2S] cluster as cofactor.

Its subcellular location is the cytoplasm. It carries out the reaction CMP-N-acetyl-beta-neuraminate + 2 Fe(II)-[cytochrome b5] + O2 + 2 H(+) = CMP-N-glycoloyl-beta-neuraminate + 2 Fe(III)-[cytochrome b5] + H2O. It participates in amino-sugar metabolism; N-acetylneuraminate metabolism. In terms of biological role, sialic acids are components of carbohydrate chains of glycoconjugates and are involved in cell-cell recognition and cell-pathogen interactions. Catalyzes the conversion of CMP-N-acetylneuraminic acid (CMP-Neu5Ac) into its hydroxylated derivative CMP-N-glycolylneuraminic acid (CMP-Neu5Gc), a sialic acid abundantly expressed at the surface of many cells. This chain is Cytidine monophosphate-N-acetylneuraminic acid hydroxylase (CMAH), found in Gorilla gorilla gorilla (Western lowland gorilla).